Consider the following 223-residue polypeptide: UPF0441 protein YgiB (223 aa).

The span at 178–195 (TVPKTAMAPKPATTTTVT) shows a compositional bias: low complexity. The interval 178 to 223 (TVPKTAMAPKPATTTTVTRGGFGESVAKQSTMQRSAAGTSTRSMGG) is disordered. A compositionally biased stretch (polar residues) spans 204 to 223 (AKQSTMQRSAAGTSTRSMGG).

Belongs to the UPF0441 family.

This Salmonella paratyphi A (strain ATCC 9150 / SARB42) protein is UPF0441 protein YgiB.